We begin with the raw amino-acid sequence, 424 residues long: Tyrosine--tRNA ligase (424 aa).

Residue tyrosine 37 participates in L-tyrosine binding. Residues 42–51 carry the 'HIGH' region motif; it reads PTADSLHLGH. Lysine 144 is subject to N6-acetyllysine. The L-tyrosine site is built by tyrosine 175 and glutamine 179. The short motif at 235-239 is the 'KMSKS' region element; it reads KFGKT. Lysine 238 provides a ligand contact to ATP. The S4 RNA-binding domain maps to 357–414; that stretch reads ADLMQALVDSELQPSRGQARKTIASNAITINGEKQSDPEYFFKEEDRLFGRFTLLRRG.

It belongs to the class-I aminoacyl-tRNA synthetase family. TyrS type 1 subfamily. As to quaternary structure, homodimer.

The protein resides in the cytoplasm. It carries out the reaction tRNA(Tyr) + L-tyrosine + ATP = L-tyrosyl-tRNA(Tyr) + AMP + diphosphate + H(+). In terms of biological role, catalyzes the attachment of tyrosine to tRNA(Tyr) in a two-step reaction: tyrosine is first activated by ATP to form Tyr-AMP and then transferred to the acceptor end of tRNA(Tyr). This chain is Tyrosine--tRNA ligase, found in Shigella boydii serotype 4 (strain Sb227).